The chain runs to 591 residues: L-fucose isomerase (591 aa).

Residues glutamate 337 and aspartate 361 each act as proton acceptor in the active site. Mn(2+)-binding residues include glutamate 337, aspartate 361, and histidine 528.

It belongs to the L-fucose isomerase family. As to quaternary structure, homohexamer. The cofactor is Mn(2+).

It is found in the cytoplasm. It carries out the reaction L-fucose = L-fuculose. It functions in the pathway carbohydrate degradation; L-fucose degradation; L-lactaldehyde and glycerone phosphate from L-fucose: step 1/3. Functionally, converts the aldose L-fucose into the corresponding ketose L-fuculose. The polypeptide is L-fucose isomerase (Shigella dysenteriae serotype 1 (strain Sd197)).